Consider the following 187-residue polypeptide: MSFISRLNTSLEEEAFHKQVADSQWVCSVDTGSGIINSDPTLDFKICPKTGGAISVLSVSWQNNSPQLVPGHYLLRSGTWPITGVKLSGLLVHRSIRLETTRKLLEAQRISVSQQASSSSAAGAAGKQPQVTLTQLQEELDEAKTRLALKEKELLEALSEISKLRLQLSNQLSNDDVFSGWTEEGPK.

Residues 127 to 172 are a coiled coil; that stretch reads KQPQVTLTQLQEELDEAKTRLALKEKELLEALSEISKLRLQLSNQL.

This is an uncharacterized protein from Tomato torrado virus (isolate Solanum lycopersicum/Spain/PRIToTV0301/-) (ToTV).